Here is a 326-residue protein sequence, read N- to C-terminus: tRNA-dihydrouridine(20a/20b) synthase [NAD(P)+] (326 aa).

FMN contacts are provided by residues 26-28 (PMV) and Q79. Catalysis depends on C108, which acts as the Proton donor. Residues K149, H177, 208 to 210 (NGD), and 232 to 233 (AR) each bind FMN.

This sequence belongs to the Dus family. Dus4 subfamily. Requires FMN as cofactor.

The protein localises to the mitochondrion. It catalyses the reaction 5,6-dihydrouridine(20a) in tRNA + NADP(+) = uridine(20a) in tRNA + NADPH + H(+). The catalysed reaction is 5,6-dihydrouridine(20a) in tRNA + NAD(+) = uridine(20a) in tRNA + NADH + H(+). It carries out the reaction 5,6-dihydrouridine(20b) in tRNA + NAD(+) = uridine(20b) in tRNA + NADH + H(+). The enzyme catalyses 5,6-dihydrouridine(20b) in tRNA + NADP(+) = uridine(20b) in tRNA + NADPH + H(+). It catalyses the reaction a 5,6-dihydrouridine in mRNA + NAD(+) = a uridine in mRNA + NADH + H(+). The catalysed reaction is a 5,6-dihydrouridine in mRNA + NADP(+) = a uridine in mRNA + NADPH + H(+). In terms of biological role, catalyzes the synthesis of dihydrouridine, a modified base found in the D-loop of most tRNAs. Also able to mediate dihydrouridylation of some mRNAs, thereby affecting their translation. The sequence is that of tRNA-dihydrouridine(20a/20b) synthase [NAD(P)+] from Schizosaccharomyces pombe (strain 972 / ATCC 24843) (Fission yeast).